The chain runs to 340 residues: Fructose-1,6-bisphosphatase class 1 (340 aa).

4 residues coordinate Mg(2+): Glu-107, Asp-126, Leu-128, and Asp-129. A substrate-binding site is contributed by Asn-215. Glu-287 contributes to the Mg(2+) binding site.

Belongs to the FBPase class 1 family. As to quaternary structure, homotetramer. Requires Mg(2+) as cofactor.

The protein resides in the cytoplasm. It catalyses the reaction beta-D-fructose 1,6-bisphosphate + H2O = beta-D-fructose 6-phosphate + phosphate. It functions in the pathway carbohydrate biosynthesis; gluconeogenesis. In Brucella ovis (strain ATCC 25840 / 63/290 / NCTC 10512), this protein is Fructose-1,6-bisphosphatase class 1.